A 265-amino-acid chain; its full sequence is uncharacterized protein (265 aa).

The active site involves Glu47.

The protein belongs to the PhzF family.

This is an uncharacterized protein from Halalkalibacterium halodurans (strain ATCC BAA-125 / DSM 18197 / FERM 7344 / JCM 9153 / C-125) (Bacillus halodurans).